We begin with the raw amino-acid sequence, 262 residues long: Outer dense fiber protein 1 (262 aa).

A phosphoserine mark is found at Ser-5 and Ser-10. The stretch at 34 to 38 (RCLCD) is repeat 1. Residues 34-77 (RCLCDLYMHPYCCCDLHPYPYCLCYSKRSRSCGLCDLYPCCLCD) are 2 X 5 AA repeats of [RC]-C-L-C-D. Residue Ser-64 is modified to Phosphoserine. Repeat unit 2 spans residues 73 to 77 (CCLCD). Phosphoserine occurs at positions 86, 122, 123, 151, 167, 189, and 194. Residues 209–250 (CNPCNPCSPCNPCNPCNPCNPCSPCSPCSPCNPCDPCNPCYP) form a C-X-P repeat region region.

As to quaternary structure, interacts (via leucine zipper motif) with TCP11. Interacts with SPAG4. Interacts with KLC3. Interacts with CCDC42.

Its subcellular location is the cell projection. The protein resides in the cilium. The protein localises to the flagellum. It localises to the cytoplasm. It is found in the cytoskeleton. Its subcellular location is the microtubule organizing center. The protein resides in the centrosome. Component of the outer dense fibers (ODF) of spermatozoa. ODF are filamentous structures located on the outside of the axoneme in the midpiece and principal piece of the mammalian sperm tail and may help to maintain the passive elastic structures and elastic recoil of the sperm tail. The protein is Outer dense fiber protein 1 (ODF1) of Sus scrofa (Pig).